Consider the following 473-residue polypeptide: Exodeoxyribonuclease I (473 aa).

The region spanning 9–188 (IYDYESFGVN…AMADVYATIA (180 aa)) is the Exonuclease domain. Positions 11, 13, and 182 each coordinate Mg(2+). Position 13 (Glu-13) interacts with substrate. The 156-residue stretch at 198–353 (PKLFQYFFEN…KVADIFNEER (156 aa)) folds into the ExoI SH3-like domain. The ExoI C-terminal domain maps to 356-472 (ASNDNVETEL…QVYEYGIKLL (117 aa)).

In terms of assembly, monomer. Interacts with ssb (via C-terminus); this interaction stimulates the exonuclease activity by recruiting the enzyme to its substrate. Mg(2+) is required as a cofactor.

It carries out the reaction Exonucleolytic cleavage in the 3'- to 5'-direction to yield nucleoside 5'-phosphates.. Functionally, degrades single-stranded DNA (ssDNA) in a highly processive manner. Also functions as a DNA deoxyribophosphodiesterase that releases deoxyribose-phosphate moieties following the cleavage of DNA at an apurinic/apyrimidinic (AP) site by either an AP endonuclease or AP lyase. Involved in genome maintenance but probably not in phase variation, which contributes to the virulence and disease. In Haemophilus influenzae (strain ATCC 51907 / DSM 11121 / KW20 / Rd), this protein is Exodeoxyribonuclease I (sbcB).